The chain runs to 746 residues: NAD(P)H-quinone oxidoreductase subunit 5, chloroplastic (746 aa).

16 helical membrane passes run 9–29, 40–60, 89–109, 125–145, 147–167, 185–205, 221–241, 258–278, 280–300, 327–347, 354–374, 396–416, 425–445, 547–567, 608–628, and 723–743; these read WIIPFIPLPVPILLGVGLLLF, WTFLSIFLLSIIMIFSLYLSI, IDPLTSIMSILITTVGILVLI, FAYMGFFNTSMLGLVTSSNLI, VYFFWELVGMCSYLLIGFWFT, GDFGLLLGILGLYWITGSFEF, VNLLFLTLCAFLLFVGPIAKS, TPISALIHAATMVAAGIFLVA, LLPLFIVIPSIMYIISLIGII, LGYMMLALGMGSYRSALFHLI, ALLFLGSGSIIHSMEAIVGYS, IAFLVGTLSLCGIPPLACFWS, LLFSPIFAIIAFSTAGLTAFY, ILFPMLVLLLFTLFIGAIGIP, FSVSIAFFGIFIAYYLYKPFY, and YLFLYLSYVLIFLMILFFFYF.

This sequence belongs to the complex I subunit 5 family. As to quaternary structure, NDH is composed of at least 16 different subunits, 5 of which are encoded in the nucleus.

It localises to the plastid. The protein resides in the chloroplast thylakoid membrane. The enzyme catalyses a plastoquinone + NADH + (n+1) H(+)(in) = a plastoquinol + NAD(+) + n H(+)(out). It carries out the reaction a plastoquinone + NADPH + (n+1) H(+)(in) = a plastoquinol + NADP(+) + n H(+)(out). Its function is as follows. NDH shuttles electrons from NAD(P)H:plastoquinone, via FMN and iron-sulfur (Fe-S) centers, to quinones in the photosynthetic chain and possibly in a chloroplast respiratory chain. The immediate electron acceptor for the enzyme in this species is believed to be plastoquinone. Couples the redox reaction to proton translocation, and thus conserves the redox energy in a proton gradient. This Nasturtium officinale (Watercress) protein is NAD(P)H-quinone oxidoreductase subunit 5, chloroplastic (ndhF).